The following is a 93-amino-acid chain: Small ribosomal subunit protein bS20 (93 aa).

Over residues 1–18 the composition is skewed to basic and acidic residues; it reads MPLHKSAEKRLRQSEKRN. Positions 1–25 are disordered; sequence MPLHKSAEKRLRQSEKRNARNRARK.

This sequence belongs to the bacterial ribosomal protein bS20 family.

In terms of biological role, binds directly to 16S ribosomal RNA. This Chlorobium chlorochromatii (strain CaD3) protein is Small ribosomal subunit protein bS20.